Reading from the N-terminus, the 224-residue chain is UPF0758 protein CBUD_1789 (224 aa).

In terms of domain architecture, MPN spans 102–224 (QLGCTQDAQQ…SFSFAESGLL (123 aa)). Residues His173, His175, and Asp186 each coordinate Zn(2+). Positions 173-186 (HNHPSGVPDPSQAD) match the JAMM motif motif.

The protein belongs to the UPF0758 family.

This Coxiella burnetii (strain Dugway 5J108-111) protein is UPF0758 protein CBUD_1789.